The primary structure comprises 315 residues: Serine/threonine-protein phosphatase PP2A catalytic subunit 2 (315 aa).

Positions 62, 64, 90, and 122 each coordinate Mn(2+). Residue His-123 is the Proton donor of the active site. His-172 and His-247 together coordinate Mn(2+). The tract at residues 294–315 (QFEPAPRENEPHTTRRVPDYFL) is disordered. The segment covering 298–315 (APRENEPHTTRRVPDYFL) has biased composition (basic and acidic residues). Leu-315 is modified (leucine methyl ester).

This sequence belongs to the PPP phosphatase family. PP-2A subfamily. Requires Mn(2+) as cofactor. Reversibly methyl esterified on Leu-315 by leucine carboxyl methyltransferase 1 (PPM1) and protein phosphatase methylesterase 1 (PPE1). Carboxyl methylation influences the affinity of the catalytic subunit for the different regulatory subunits, thereby modulating the PP2A holoenzyme's substrate specificity, enzyme activity and cellular localization.

The catalysed reaction is O-phospho-L-seryl-[protein] + H2O = L-seryl-[protein] + phosphate. It carries out the reaction O-phospho-L-threonyl-[protein] + H2O = L-threonyl-[protein] + phosphate. The protein is Serine/threonine-protein phosphatase PP2A catalytic subunit 2 (Ppn2) of Paramecium tetraurelia.